Consider the following 375-residue polypeptide: Oleosin-B6 (375 aa).

Residues 1-32 (MKEEIQNETAQTQLQREGRMFSFLFPVIEVIK) are polar. 3 helical membrane passes run 21 to 43 (FSFL…SVVF), 55 to 75 (AVAL…LVPA), and 81 to 101 (LLAT…GLLM). The interval 33–112 (VVMASVASVV…LIKHPGKEGA (80 aa)) is hydrophobic. Disordered regions lie at residues 144–284 (PGVG…SFLS) and 303–375 (IPGF…DESS). Positions 148–179 (KKSEGRGESKGKKGKKGKSEHGRGKHEGEGKS) are enriched in basic and acidic residues. Positions 193–210 (NNPPPAGAPPTGSPPAAP) are enriched in pro residues. Repeat copies occupy residues 207–209 (PAA), 210–212 (PAA), 213–215 (PEA), 216–218 (PAA), 219–221 (PAA), 222–224 (PAA), 225–227 (PAA), 228–230 (PAA), 231–233 (PAA), 234–236 (PAA), 237–239 (PED), 240–242 (PAA), 243–245 (PAA), 246–248 (PEA), 249–251 (PAT), 252–254 (PAA), 255–257 (PPA), 258–260 (PAA), 261–263 (APA), 264–266 (PAA), 267–269 (PAA), 270–272 (PPA), and 273–275 (PAA). Positions 207-275 (PAAPAAPEAP…APAAPPAPAA (69 aa)) are 23 X 3 AA approximate tandem repeats of P-A-A. The span at 211–251 (AAPEAPAAPAAPAAPAAPAAPAAPAAPEDPAAPAAPEAPAT) shows a compositional bias: low complexity. A compositionally biased stretch (pro residues) spans 252-280 (PAAPPAPAAAPAPAAPAAPPAPAAPPRPP). Positions 316–331 (SKGGKKSKGKGKSNGR) are enriched in basic residues.

The protein belongs to the oleosin family. In terms of tissue distribution, the full-length protein is found in the tapetal lipid bodies of immature anthers, the proteolytically cleaved C-terminal product is found on the coats of pollen grains. Not found in flowers, developing embryos or leaf tissue.

It localises to the lipid droplet. Its subcellular location is the membrane. Its function is as follows. Many of the major pollen coat proteins are derived from endoproteolytic cleavage of oleosin-like proteins. The protein is Oleosin-B6 of Brassica napus (Rape).